A 431-amino-acid polypeptide reads, in one-letter code: Glucose-1-phosphate adenylyltransferase (431 aa).

Lysine 39 serves as a coordination point for beta-D-fructose 1,6-bisphosphate. Arginine 40, histidine 46, and arginine 52 together coordinate AMP. An alpha-D-glucose 1-phosphate-binding site is contributed by tyrosine 114. Arginine 130 is an AMP binding site. Residues glycine 179, 194–195 (EK), and serine 212 contribute to the alpha-D-glucose 1-phosphate site. AMP-binding residues include glutamate 370 and arginine 386. Residues 419–423 (REMLR) and 429–431 (QER) contribute to the beta-D-fructose 1,6-bisphosphate site.

This sequence belongs to the bacterial/plant glucose-1-phosphate adenylyltransferase family. Homotetramer.

It carries out the reaction alpha-D-glucose 1-phosphate + ATP + H(+) = ADP-alpha-D-glucose + diphosphate. It participates in glycan biosynthesis; glycogen biosynthesis. Allosterically activated by fructose-1,6-bisphosphate (F16BP) and inhibited by AMP. Functionally, involved in the biosynthesis of ADP-glucose, a building block required for the elongation reactions to produce glycogen. Catalyzes the reaction between ATP and alpha-D-glucose 1-phosphate (G1P) to produce pyrophosphate and ADP-Glc. In Escherichia coli O7:K1 (strain IAI39 / ExPEC), this protein is Glucose-1-phosphate adenylyltransferase.